A 500-amino-acid chain; its full sequence is tRNA modification GTPase MnmE (500 aa).

3 residues coordinate (6S)-5-formyl-5,6,7,8-tetrahydrofolate: Arg-24, Glu-120, and Lys-159. Residues 256 to 420 (GIPVAIIGET…LEKKLVQAAA (165 aa)) enclose the TrmE-type G domain. Asn-266 is a K(+) binding site. GTP is bound by residues 266 to 271 (NAGKST), 285 to 291 (SDIHGTT), and 310 to 313 (DTAG). A Mg(2+)-binding site is contributed by Ser-270. K(+) contacts are provided by Ser-285, Ile-287, and Thr-290. Thr-291 contributes to the Mg(2+) binding site. (6S)-5-formyl-5,6,7,8-tetrahydrofolate is bound at residue Lys-500.

It belongs to the TRAFAC class TrmE-Era-EngA-EngB-Septin-like GTPase superfamily. TrmE GTPase family. In terms of assembly, homodimer. Heterotetramer of two MnmE and two MnmG subunits. K(+) is required as a cofactor.

It localises to the cytoplasm. Its function is as follows. Exhibits a very high intrinsic GTPase hydrolysis rate. Involved in the addition of a carboxymethylaminomethyl (cmnm) group at the wobble position (U34) of certain tRNAs, forming tRNA-cmnm(5)s(2)U34. The protein is tRNA modification GTPase MnmE of Phocaeicola vulgatus (strain ATCC 8482 / DSM 1447 / JCM 5826 / CCUG 4940 / NBRC 14291 / NCTC 11154) (Bacteroides vulgatus).